Reading from the N-terminus, the 140-residue chain is Ribonucleases P/MRP protein subunit POP7 (140 aa).

The interval 1–21 (MALKKNTHNKSTKRVTKHPSL) is disordered. A Phosphoserine modification is found at Ser115.

It belongs to the histone-like Alba family. In terms of assembly, component of nuclear RNase P and RNase MRP complexes. RNase P consists of an RNA moiety and at least 9 protein subunits including POP1, POP3, POP4, POP5, POP6, POP7, POP8, RPP1 and RPR2. RNase MRP complex consists of an RNA moiety and at least 10 protein subunits including POP1, POP3, POP4, POP5, POP6, POP7, POP8, RMP1, RPP1 and SNM1, many of which are shared with the RNase P complex.

Its subcellular location is the nucleus. The catalysed reaction is Endonucleolytic cleavage of RNA, removing 5'-extranucleotides from tRNA precursor.. Its function is as follows. Component of ribonuclease P, a protein complex that generates mature tRNA molecules by cleaving their 5'-ends. Also a component of RNase MRP, which cleaves pre-rRNA sequences. In Saccharomyces cerevisiae (strain ATCC 204508 / S288c) (Baker's yeast), this protein is Ribonucleases P/MRP protein subunit POP7 (POP7).